The sequence spans 240 residues: MATKIFSLLMLLALSTCVANATIFPQCSQAPIASLLPPYLPSIIASICENPALQPYRLQQAIAASNIPSSPLLFQQSPALSLVQSLVQTIRAQQLQQLVLPLINQVVLANLSPYSQQQQFLPFNQLSTLNPAAYLQQQLLPSSQLATAYCQQQQLLPFNQLAALNPAAYLQQQILLPFSQLAAANRASFLTQQQLLLFYQQFAANPATLLQLQQLLPFVQLALTDPAASYQQHIIGGALF.

Positions methionine 1 to alanine 21 are cleaved as a signal peptide.

The protein belongs to the zein family.

Zeins are major seed storage proteins. The chain is Zein-alpha M6 from Zea mays (Maize).